The sequence spans 207 residues: Small ribosomal subunit protein uS4A (207 aa).

Residues 98–163 (TRLDNLVYRL…SPKFKELKEN (66 aa)) form the S4 RNA-binding domain.

The protein belongs to the universal ribosomal protein uS4 family. Part of the 30S ribosomal subunit. Contacts protein S5. The interaction surface between S4 and S5 is involved in control of translational fidelity.

Its function is as follows. One of the primary rRNA binding proteins, it binds directly to 16S rRNA where it nucleates assembly of the body of the 30S subunit. With S5 and S12 plays an important role in translational accuracy. The protein is Small ribosomal subunit protein uS4A of Alkaliphilus metalliredigens (strain QYMF).